The primary structure comprises 431 residues: Enolase (431 aa).

Glutamine 166 serves as a coordination point for (2R)-2-phosphoglycerate. Glutamate 208 functions as the Proton donor in the catalytic mechanism. Residues aspartate 245, glutamate 288, and aspartate 315 each contribute to the Mg(2+) site. Lysine 340, arginine 369, serine 370, and lysine 391 together coordinate (2R)-2-phosphoglycerate. Residue lysine 340 is the Proton acceptor of the active site.

Belongs to the enolase family. The cofactor is Mg(2+).

The protein localises to the cytoplasm. The protein resides in the secreted. It is found in the cell surface. The enzyme catalyses (2R)-2-phosphoglycerate = phosphoenolpyruvate + H2O. It participates in carbohydrate degradation; glycolysis; pyruvate from D-glyceraldehyde 3-phosphate: step 4/5. Functionally, catalyzes the reversible conversion of 2-phosphoglycerate (2-PG) into phosphoenolpyruvate (PEP). It is essential for the degradation of carbohydrates via glycolysis. This chain is Enolase, found in Clostridium botulinum (strain Okra / Type B1).